We begin with the raw amino-acid sequence, 304 residues long: KIN17-like protein (304 aa).

The C2H2-type zinc finger occupies 26–50 (WYCSACQKQMRDENGFKCHTQSEGH). Disordered stretches follow at residues 204–228 (IDLSKKGNPIQLNLSSSSDSHSAQN) and 261–291 (LNKSRKKNNKDSLDQGQNVKRPRSAVEDIIA).

Belongs to the KIN17 family.

It localises to the nucleus. The protein resides in the nucleolus. This chain is KIN17-like protein, found in Schizosaccharomyces pombe (strain 972 / ATCC 24843) (Fission yeast).